A 222-amino-acid chain; its full sequence is N-acetyltransferase 8 (222 aa).

Topologically, residues 1-35 (MASFHIRQFQERDYEQVVDMFSRGMKEHIPTAFRH) are cytoplasmic. A helical; Signal-anchor for type II membrane protein transmembrane segment spans residues 36 to 56 (LLLLPRTLLLLLGVPLALVLV). Residues 57-222 (SGSWLLAVVC…IHFIYPLPSS (166 aa)) lie on the Lumenal side of the membrane. Residues 62–217 (LAVVCIFFLL…VDVSLIHFIY (156 aa)) form the N-acetyltransferase domain.

It belongs to the NAT8 family.

Its subcellular location is the endoplasmic reticulum-Golgi intermediate compartment membrane. The protein resides in the endoplasmic reticulum membrane. It catalyses the reaction L-lysyl-[protein] + acetyl-CoA = N(6)-acetyl-L-lysyl-[protein] + CoA + H(+). The catalysed reaction is an S-substituted L-cysteine + acetyl-CoA = an N-acetyl-L-cysteine-S-conjugate + CoA + H(+). It functions in the pathway sulfur metabolism; glutathione metabolism. Endoplasmic reticulum-membrane(ER)-bound lysine N-acetyltransferase catalyzing the N6-acetylation of lysine residues in the lumen of the ER in various proteins, including PROM1 and BACE1, using acetyl-CoA as acetyl donor. Thereby, may regulate apoptosis through the acetylation and the regulation of the expression of PROM1. May also regulate amyloid beta-peptide secretion through acetylation of BACE1 and the regulation of its expression in neurons. N(6)-lysine acetylation in the ER maintains protein homeostasis and regulates reticulophagy. Alternatively, acetylates the free alpha-amino group of cysteine S-conjugates to form mercapturic acids. This is the final step in a major route for detoxification of a wide variety of reactive electrophiles which starts with their incorporation into glutathione S-conjugates. The glutathione S-conjugates are then further processed into cysteine S-conjugates and finally mercapturic acids which are water soluble and can be readily excreted in urine or bile. This Rattus norvegicus (Rat) protein is N-acetyltransferase 8 (Nat8).